Consider the following 200-residue polypeptide: uncharacterized protein (200 aa).

The signal sequence occupies residues 1–19; sequence MNAMFHSLFALSFVSLVAS. The helical transmembrane segment at 148-168 threads the bilayer; that stretch reads FMVIVSLAAFCISVLAGLALQ.

The protein localises to the membrane. This is an uncharacterized protein from Caenorhabditis elegans.